The following is a 153-amino-acid chain: Aspartate carbamoyltransferase regulatory chain (153 aa).

Zn(2+) contacts are provided by C109, C114, C138, and C141.

This sequence belongs to the PyrI family. Contains catalytic and regulatory chains. It depends on Zn(2+) as a cofactor.

In terms of biological role, involved in allosteric regulation of aspartate carbamoyltransferase. This Edwardsiella ictaluri (strain 93-146) protein is Aspartate carbamoyltransferase regulatory chain.